Here is a 365-residue protein sequence, read N- to C-terminus: TD and POZ domain-containing protein 1 (365 aa).

An MATH domain is found at 19–149 (KFCYKWTISN…EDQLTICCKV (131 aa)). A BTB domain is found at 188–250 (TDCCLLVAGH…EMMGFIYTGK (63 aa)).

Belongs to the Tdpoz family.

The chain is TD and POZ domain-containing protein 1 from Mus musculus (Mouse).